The primary structure comprises 267 residues: Probable aquaporin TIP3-2 (267 aa).

Met-1 bears the N-acetylmethionine mark. Position 2 is an N-acetylalanine; in Probable aquaporin TIP3-2, N-terminally processed (Ala-2). Over 2–26 (ATSARRAYGFGRADEATHPDSIRAT) the chain is Cytoplasmic. A helical membrane pass occupies residues 27 to 47 (LAEFLSTFVFVFAGEGSILAL). Residues 48 to 66 (DKLYWDTAAHTGTNTPGGL) are Vacuolar-facing. A helical transmembrane segment spans residues 67-87 (VLVALAHALALFAAVSAAINV). Over 88–110 (SGGHVNPAVTFAALIGGRISVIR) the chain is Cytoplasmic. An NPA 1 motif is present at residues 93–95 (NPA). A helical membrane pass occupies residues 111 to 131 (AIYYWVAQLIGAILACLLLRL). Over 132–151 (ATNGLRPVGFHVASGVSELH) the chain is Vacuolar. The chain crosses the membrane as a helical span at residues 152–172 (GLLMEIILTFALVYVVYSTAI). The Cytoplasmic portion of the chain corresponds to 173 to 178 (DPKRGS). A helical transmembrane segment spans residues 179–199 (IGIIAPLAIGLIVGANILVGG). Over 200-226 (PFDGASMNPARAFGPALVGWRWSNHWI) the chain is Vacuolar. Residues 207 to 209 (NPA) carry the NPA 2 motif. A helical transmembrane segment spans residues 227 to 247 (YWVGPFIGGALAALIYEYMII). Over 248–267 (PSVNEPPHHSTHQPLAPEDY) the chain is Cytoplasmic.

It belongs to the MIP/aquaporin (TC 1.A.8) family. TIP (TC 1.A.8.10) subfamily. As to expression, predominantly expressed in developing seeds. Also expressed in rosette leaves.

The protein localises to the vacuole membrane. Functionally, aquaporins facilitate the transport of water and small neutral solutes across cell membranes. The sequence is that of Probable aquaporin TIP3-2 (TIP3-2) from Arabidopsis thaliana (Mouse-ear cress).